Here is a 450-residue protein sequence, read N- to C-terminus: Phosphoglucosamine mutase (450 aa).

Ser-102 serves as the catalytic Phosphoserine intermediate. The Mg(2+) site is built by Ser-102, Asp-243, Asp-245, and Asp-247. Ser-102 carries the phosphoserine modification.

It belongs to the phosphohexose mutase family. The cofactor is Mg(2+). In terms of processing, activated by phosphorylation.

The catalysed reaction is alpha-D-glucosamine 1-phosphate = D-glucosamine 6-phosphate. Its function is as follows. Catalyzes the conversion of glucosamine-6-phosphate to glucosamine-1-phosphate. This is Phosphoglucosamine mutase from Allorhizobium ampelinum (strain ATCC BAA-846 / DSM 112012 / S4) (Agrobacterium vitis (strain S4)).